Here is a 165-residue protein sequence, read N- to C-terminus: Cysteine-rich hydrophobic domain-containing protein 2 (165 aa).

Positions Met-1–Ser-26 form a coiled coil. The CHIC motif (Cys-rich) signature appears at Cys-88–Cys-106.

This sequence belongs to the CHIC family. In terms of processing, palmitoylation in the CHIC motif is required for membrane association.

Its subcellular location is the membrane. The protein resides in the golgi apparatus. In Mus musculus (Mouse), this protein is Cysteine-rich hydrophobic domain-containing protein 2 (Chic2).